The chain runs to 230 residues: Transmembrane protein 225 (230 aa).

Residues 1-8 are Cytoplasmic-facing; that stretch reads MMHIPNRS. A helical membrane pass occupies residues 9–29; the sequence is IQAANIFFSSGAILLLIVGLI. The Extracellular segment spans residues 30-71; that stretch reads MEDWVELIPKVRKDKTTHSPWLGCCPPFWPEESLEVVRRIMR. A helical transmembrane segment spans residues 72–92; it reads MTLNISIYLNLIIGLQFSYMI. Over 93–99 the chain is Cytoplasmic; that stretch reads SQNKCVH. A helical transmembrane segment spans residues 100-120; that stretch reads LLVGFLSFFAGCLLFYAIIVY. Over 121–139 the chain is Extracellular; it reads HHKLNKGQYVYFVNYKTKW. Residues 140–160 traverse the membrane as a helical segment; sequence IAFTVYLTIALFLTCGIFCFI. The Cytoplasmic segment spans residues 161-230; the sequence is QSTNRCECMK…TQARRVTWAL (70 aa). The RVxF signature appears at 224–228; that stretch reads RRVTW.

In terms of assembly, interacts (via RVxF motif) with PPP1CC. Expressed in testis, epididymis and spermatozoa (at protein level). Not expressed in brain, heart, lung, liver, spleen, kidney and skeletal muscle.

It is found in the cytoplasmic vesicle. Its subcellular location is the secretory vesicle. The protein resides in the acrosome membrane. Functionally, probably inhibits protein phosphatase 1 (PP1) in sperm via binding to catalytic subunit PPP1CC. The polypeptide is Transmembrane protein 225 (Tmem225) (Mus musculus (Mouse)).